A 103-amino-acid chain; its full sequence is N(4)-acetylcytidine amidohydrolase (103 aa).

The ASCH domain maps to 7–93 (TFFERFEQDI…VIAEIYPGLE (87 aa)). Residue Lys-21 is the Proton acceptor of the active site. Thr-24 functions as the Nucleophile in the catalytic mechanism. The active-site Proton donor is the Glu-74.

This sequence belongs to the N(4)-acetylcytidine amidohydrolase family.

It catalyses the reaction N(4)-acetylcytidine + H2O = cytidine + acetate + H(+). It carries out the reaction N(4)-acetyl-2'-deoxycytidine + H2O = 2'-deoxycytidine + acetate + H(+). The catalysed reaction is N(4)-acetylcytosine + H2O = cytosine + acetate + H(+). Its function is as follows. Catalyzes the hydrolysis of N(4)-acetylcytidine (ac4C). The protein is N(4)-acetylcytidine amidohydrolase of Shewanella putrefaciens (strain CN-32 / ATCC BAA-453).